We begin with the raw amino-acid sequence, 180 residues long: SAGA-associated factor 11 homolog (180 aa).

The segment at 98–119 (CSCPNCNRIVAASRFAPHLEKC) adopts an SGF11-type zinc-finger fold. Residues 138–180 (RDGGNYFGADEDDEDDADWSGEKRKKKIAPVRTNGSKKNGKTS) are disordered. The segment covering 146 to 156 (ADEDDEDDADW) has biased composition (acidic residues).

It belongs to the SGF11 family. As to quaternary structure, component of some SAGA transcription coactivator-HAT complexes. Within the SAGA complex, participates in a subcomplex of SAGA called the DUB module (deubiquitination module).

The protein resides in the nucleus. In terms of biological role, component of the transcription regulatory histone acetylation (HAT) complex SAGA, a multiprotein complex that activates transcription by remodeling chromatin and mediating histone acetylation and deubiquitination. Within the SAGA complex, participates in a subcomplex that specifically deubiquitinates histone H2B. The SAGA complex is recruited to specific gene promoters by activators, where it is required for transcription. This Aedes aegypti (Yellowfever mosquito) protein is SAGA-associated factor 11 homolog.